Reading from the N-terminus, the 1649-residue chain is Formin-like protein 20 (1649 aa).

The 194-residue stretch at 1-194 folds into the Phosphatase tensin-type domain; that stretch reads MALFRRFFYK…QYISRRNLGS (194 aa). Catalysis depends on cysteine 127, which acts as the Phosphocysteine intermediate. A C2 tensin-type domain is found at 200-339; the sequence is DTPLLLDCLI…FKAEVLFSGA (140 aa). 2 disordered regions span residues 416–774 and 787–1245; these read DCAS…PWKS and STSQ…QKKS. Over residues 421 to 483 the composition is skewed to basic and acidic residues; it reads DSNHKHDMHA…RRTVEAKEND (63 aa). Polar residues-rich tracts occupy residues 500–513 and 585–597; these read LESM…SLNK and RINS…TTSL. Residues 598–616 are compositionally biased toward basic and acidic residues; the sequence is KDGKRATSPDGVIPKDAKT. Pro residues predominate over residues 648–662; sequence SLPPASPHQAPPPLP. Residues 665–678 show a composition bias toward polar residues; it reads TSEAKTVLHSSQAV. Composition is skewed to pro residues over residues 680 to 691, 701 to 711, 722 to 732, 743 to 752, and 795 to 804; these read SPPPPPPPPPLP, LPPPPPPPPPF, LPPPPPPPLP, and SPTPPPPPPA. Residues 809–820 show a composition bias toward polar residues; it reads GQKSSDLQTSQL. Pro residues-rich tracts occupy residues 821 to 832, 843 to 854, and 865 to 874; these read PSPPPPPPPPPF, LPPPPPPPPPPF, and LPPPPPPPPW. Residues 878 to 890 are compositionally biased toward polar residues; sequence YASTFETHEACST. Pro residues-rich tracts occupy residues 893–904, 944–960, and 968–1213; these read SPPPPPPPPPFS, PSPP…PPPF, and SPPP…PPPM. Residues 1237–1635 form the FH2 domain; it reads FGSAAQKKSS…KALKEAEMEK (399 aa).

Belongs to the formin-like family. Class-II subfamily.

The sequence is that of Formin-like protein 20 (FH20) from Arabidopsis thaliana (Mouse-ear cress).